The chain runs to 960 residues: Leucine-rich repeat receptor-like serine/threonine-protein kinase SKM1 (960 aa).

The signal sequence occupies residues 1-29 (MSTSHHHHHPPYLITTLFFLFLNFSCLHA). Over 30 to 634 (NELELLLSFK…VRKRSTKSWW (605 aa)) the chain is Extracellular. Cys61 and Cys68 are disulfide-bonded. Residues Asn70, Asn83, Asn103, Asn108, Asn129, and Asn134 are each glycosylated (N-linked (GlcNAc...) asparagine). 22 LRR repeats span residues 71–96 (ISRVVSLDLSGKNMSGQILTAATFRL), 97–120 (PFLQTINLSNNNLSGPIPHDIFTT), 122–146 (SPSLRYLNLSNNNFSGSIPRGFLPN), 149–168 (TLDLSNNMFTGEIYNDIGVF), 169–194 (SNLRVLDLGGNVLTGHVPGYLGNLSR), 196–216 (EFLTLASNQLTGGVPVELGKM), 217–240 (KNLKWIYLGYNNLSGEIPYQIGGL), 241–264 (SSLNHLDLVYNNLSGPIPPSLGDL), 265–288 (KKLEYMFLYQNKLSGQIPPSIFSL), 290–312 (NLISLDFSDNSLSGEIPELVAQM), 313–336 (QSLEILHLFSNNLTGKIPEGVTSL), 338–360 (RLKVLQLWSNRFSGGIPANLGKH), 361–384 (NNLTVLDLSTNNLTGKLPDTLCDS), 386–408 (HLTKLILFSNSLDSQIPPSLGMC), 409–432 (QSLERVRLQNNGFSGKLPRGFTKL), 434–454 (LVNFLDLSNNNLQGNINTWDM), 455–477 (PQLEMLDLSVNKFFGELPDFSRS), 478–501 (KRLKKLDLSRNKISGVVPQGLMTF), 503–525 (EIMDLDLSENEITGVIPRELSSC), 526–549 (KNLVNLDLSHNNFTGEIPSSFAEF), 550–573 (QVLSDLDLSCNQLSGEIPKNLGNI), and 575–598 (SLVQVNISHNLLHGSLPFTGAFLA). Residue Asn191 is glycosylated (N-linked (GlcNAc...) asparagine). Positions 221-226 (WIYLGY) match the CLE45 peptide binding motif. Residues Asn228 and Asn252 are each glycosylated (N-linked (GlcNAc...) asparagine). Residue Asn324 is glycosylated (N-linked (GlcNAc...) asparagine). Residues Asn362 and Asn372 are each glycosylated (N-linked (GlcNAc...) asparagine). Asn537 carries an N-linked (GlcNAc...) asparagine glycan. N-linked (GlcNAc...) asparagine glycans are attached at residues Asn580 and Asn600. The chain crosses the membrane as a helical span at residues 635 to 655 (LIITSTFAAFLAVLVSGFFIV). Residues 656–960 (LVFQRTHNVL…TYLSKILSLA (305 aa)) are Cytoplasmic-facing. The Protein kinase domain maps to 691-953 (FTVNTILSSL…SSSSSCTTYL (263 aa)). A Phosphothreonine modification is found at Thr692. Residues 697–705 (LSSLKDQNV) and Lys717 each bind ATP. The residue at position 834 (Tyr834) is a Phosphotyrosine.

This sequence belongs to the protein kinase superfamily. Ser/Thr protein kinase family. In terms of assembly, self-interacts. Binds to CLE45 present in the pistil, particularly under relatively high temperature (at 30 degrees Celsius). As to expression, expressed in pollen grains and roots vascular tissues. Present in roots.

The protein localises to the cell membrane. The catalysed reaction is L-seryl-[protein] + ATP = O-phospho-L-seryl-[protein] + ADP + H(+). It carries out the reaction L-threonyl-[protein] + ATP = O-phospho-L-threonyl-[protein] + ADP + H(+). In terms of biological role, receptor with a serine/threonine-protein kinase activity. Together with SKM2, LRR-rich receptor-like kinase (LRR-RLK) required for male fertility by the perception of CLE43 and CLE45 peptides and the transduction of their promoting action in pollen tubes, especially under relatively high temperature (at 30 degrees Celsius), thus conferring tolerance against high temperature probably through the maintenance of mitochondrial activity. Seems to not be involved in the perception of CLE45 peptide in roots. In Arabidopsis thaliana (Mouse-ear cress), this protein is Leucine-rich repeat receptor-like serine/threonine-protein kinase SKM1.